Consider the following 131-residue polypeptide: M-zodatoxin-Lt8m (131 aa).

The first 20 residues, 1-20 (MKYFVVALALVAAFACIAES), serve as a signal peptide directing secretion. A propeptide spanning residues 21–60 (KPAESEHELAEVEEENELADLEDAVWLEHLADLSDLEEAR) is cleaved from the precursor.

The protein belongs to the cationic peptide 06 (cytoinsectotoxin) family. Expressed by the venom gland.

Its subcellular location is the secreted. Functionally, insecticidal, cytolytic and antimicrobial peptide. Forms voltage-dependent, ion-permeable channels in membranes. At high concentration causes cell membrane lysis. The polypeptide is M-zodatoxin-Lt8m (cit 1-13) (Lachesana tarabaevi (Spider)).